The following is a 328-amino-acid chain: DNA polymerase IV (328 aa).

The UmuC domain maps to 6–187 (IIHIDMDYFF…LDIGDFPGVG (182 aa)). Residues aspartate 10 and aspartate 105 each coordinate Mg(2+). The active site involves glutamate 106.

Belongs to the DNA polymerase type-Y family. In terms of assembly, monomer. Requires Mg(2+) as cofactor.

The protein localises to the cytoplasm. The catalysed reaction is DNA(n) + a 2'-deoxyribonucleoside 5'-triphosphate = DNA(n+1) + diphosphate. In terms of biological role, poorly processive, error-prone DNA polymerase involved in untargeted mutagenesis. Copies undamaged DNA at stalled replication forks, which arise in vivo from mismatched or misaligned primer ends. These misaligned primers can be extended by PolIV. Exhibits no 3'-5' exonuclease (proofreading) activity. May be involved in translesional synthesis, in conjunction with the beta clamp from PolIII. The sequence is that of DNA polymerase IV from Staphylococcus aureus (strain bovine RF122 / ET3-1).